The sequence spans 268 residues: Undecaprenyl-diphosphatase 1 (268 aa).

The next 7 helical transmembrane spans lie at 5–25, 43–63, 84–104, 107–127, 184–204, 218–238, and 247–267; these read SIISALLLGIIEGLTEFIPVS, GNTFAVLIQLGAILAILLVYF, LAVLVAFLPAAVIGALAHDFI, VLFETPMLICVVLIIGGFILL, AAEFSFFLAMPTMLGAFVLDL, LIAVGFVAAFVSGLFVVRSLL, and APFAWWRIVIGALGLVALLVI.

It belongs to the UppP family.

The protein resides in the cell inner membrane. It catalyses the reaction di-trans,octa-cis-undecaprenyl diphosphate + H2O = di-trans,octa-cis-undecaprenyl phosphate + phosphate + H(+). In terms of biological role, catalyzes the dephosphorylation of undecaprenyl diphosphate (UPP). Confers resistance to bacitracin. The sequence is that of Undecaprenyl-diphosphatase 1 from Agrobacterium fabrum (strain C58 / ATCC 33970) (Agrobacterium tumefaciens (strain C58)).